Reading from the N-terminus, the 214-residue chain is MSLSTFSGGSTTACAACKHQRKKCKKNCILARYFPQDGTNKFLNAHKLFGVSNITKMLKRIEESQRDIAMENLIYHANARALDPVGGVYRTICDLKCKIEFVQTELNLTRQQIDMCRSLAQEQHRQRQNLPYRCNSFESLLQQDGDEYVNVDGLDHQNMQQQQEMQQQQQNPSNYDMFLEMPEQTSKVKLEEEKISDQRKNNLMRQILMSSAII.

The region spanning 12–113 (TACAACKHQR…TELNLTRQQI (102 aa)) is the LOB domain.

It belongs to the LOB domain-containing protein family.

The sequence is that of LOB domain-containing protein 7 (LBD7) from Arabidopsis thaliana (Mouse-ear cress).